The following is a 491-amino-acid chain: Stromelysin-3 (491 aa).

The N-terminal stretch at 1–35 is a signal peptide; sequence MARAACLLRAISRALLLPLPLLLLLLLLLPPQLMA. Positions 36 to 101 are cleaved as a propeptide — activation peptide; the sequence is RARPPENHRH…VLNARNRQKR (66 aa). The Cysteine switch motif lies at 82 to 89; sequence LRCGVPDP. Zn(2+) contacts are provided by C84, H168, and D170. Ca(2+) is bound by residues D175, G176, G178, and I180. Positions 183, 196, and 218 each coordinate Zn(2+). E219 is a catalytic residue. The Zn(2+) site is built by H222 and H228. Residues 260-279 form a disordered region; that stretch reads YGRPQLTPTSPTPTLSSQAG. The segment covering 263–277 has biased composition (low complexity); it reads PQLTPTSPTPTLSSQ. C297 and C483 are disulfide-bonded. Hemopexin repeat units lie at residues 298 to 342, 343 to 385, 387 to 435, and 436 to 483; these read ETSF…WQGL, PSPV…KLGL, GSPV…WRGV, and PSEI…FFDC.

This sequence belongs to the peptidase M10A family. Ca(2+) is required as a cofactor. The cofactor is Zn(2+). In terms of processing, the precursor is cleaved by a furin endopeptidase. Highly expressed in ovary and uterus.

The protein resides in the secreted. It is found in the extracellular space. It localises to the extracellular matrix. Its function is as follows. May play an important role in the progression of epithelial malignancies. This chain is Stromelysin-3 (Mmp11), found in Rattus norvegicus (Rat).